Consider the following 119-residue polypeptide: Beta-2-microglobulin (119 aa).

Residues 1–20 (MARFVVVALLVQLSLFGLEA) form the signal peptide. An Ig-like C1-type domain is found at 25–114 (PKIQVYSRYP…VTFSTPKTVK (90 aa)). An intrachain disulfide couples C45 to C100.

It belongs to the beta-2-microglobulin family. Heterodimer of an alpha chain and a beta chain. Beta-2-microglobulin is the beta-chain of major histocompatibility complex class I molecules.

It is found in the secreted. In terms of biological role, component of the class I major histocompatibility complex (MHC). Involved in the presentation of peptide antigens to the immune system. This chain is Beta-2-microglobulin (B2M), found in Saguinus imperator (Emperor tamarin).